The chain runs to 394 residues: Protein TsgA homolog (394 aa).

A run of 12 helical transmembrane segments spans residues 11-31, 51-71, 76-96, 101-121, 134-154, 160-180, 206-226, 246-266, 274-294, 297-317, 334-354, and 363-383; these read WISF…GMVM, FLNT…EIIP, LVFG…GHNL, ACMF…TFLI, LLFT…IAAT, VAWY…FILT, IGVL…LGFI, GLVS…SVAL, IVTV…SSQQ, MLSM…TTLI, FILT…GPIV, and LATA…LGFV.

It belongs to the major facilitator superfamily. TsgA family.

Its subcellular location is the cell inner membrane. The protein is Protein TsgA homolog of Edwardsiella ictaluri (strain 93-146).